A 122-amino-acid polypeptide reads, in one-letter code: Large ribosomal subunit protein uL14 (122 aa).

Belongs to the universal ribosomal protein uL14 family. In terms of assembly, part of the 50S ribosomal subunit. Forms a cluster with proteins L3 and L19. In the 70S ribosome, L14 and L19 interact and together make contacts with the 16S rRNA in bridges B5 and B8.

Its function is as follows. Binds to 23S rRNA. Forms part of two intersubunit bridges in the 70S ribosome. This Streptomyces coelicolor (strain ATCC BAA-471 / A3(2) / M145) protein is Large ribosomal subunit protein uL14.